A 219-amino-acid polypeptide reads, in one-letter code: MKNWTDVIGKEKEQPYFQHALQQVHLARANGKTIYPPQEEVFNAFKYTAFEDVKVVILGQDPYHGANQAHGLAFSVKPEVAIPPSLLNMYKELTQDISGFQMPSNGYLVKWAEQGVLLLNTVLTVERGMAHSHANLGWERFTDKVIAVLNEHREKLVFLLWGSHAQKKDKLIDRTRHLVLTAPHPSPLSAHRGFFGCHHFSKTNSYLESNGMKPIDWQI.

The Proton acceptor role is filled by aspartate 61.

It belongs to the uracil-DNA glycosylase (UDG) superfamily. UNG family.

The protein resides in the cytoplasm. The catalysed reaction is Hydrolyzes single-stranded DNA or mismatched double-stranded DNA and polynucleotides, releasing free uracil.. In terms of biological role, excises uracil residues from the DNA which can arise as a result of misincorporation of dUMP residues by DNA polymerase or due to deamination of cytosine. In Haemophilus influenzae (strain PittEE), this protein is Uracil-DNA glycosylase.